Consider the following 141-residue polypeptide: Small ribosomal subunit protein bS16 (141 aa).

Residues 84-141 (TRKARSNPEKSKPKAKAQERLEAARMAEEEAAAAAKAAAEAPAEEAPAAEAPAEEAQA) are disordered. Residues 89–111 (SNPEKSKPKAKAQERLEAARMAE) show a composition bias toward basic and acidic residues. Over residues 115–141 (AAAAKAAAEAPAEEAPAAEAPAEEAQA) the composition is skewed to low complexity.

The protein belongs to the bacterial ribosomal protein bS16 family.

In Parvibaculum lavamentivorans (strain DS-1 / DSM 13023 / NCIMB 13966), this protein is Small ribosomal subunit protein bS16.